Reading from the N-terminus, the 67-residue chain is ATP synthase subunit c (67 aa).

2 helical membrane-spanning segments follow: residues 6 to 26 (ILALGIAVLGVSLGEGILVAN) and 46 to 66 (IMGVAFIEGTFFVLLASTFFV).

This sequence belongs to the ATPase C chain family. F-type ATPases have 2 components, F(1) - the catalytic core - and F(0) - the membrane proton channel. F(1) has five subunits: alpha(3), beta(3), gamma(1), delta(1), epsilon(1). F(0) has three main subunits: a(1), b(2) and c(10-14). The alpha and beta chains form an alternating ring which encloses part of the gamma chain. F(1) is attached to F(0) by a central stalk formed by the gamma and epsilon chains, while a peripheral stalk is formed by the delta and b chains.

The protein resides in the cell membrane. In terms of biological role, f(1)F(0) ATP synthase produces ATP from ADP in the presence of a proton or sodium gradient. F-type ATPases consist of two structural domains, F(1) containing the extramembraneous catalytic core and F(0) containing the membrane proton channel, linked together by a central stalk and a peripheral stalk. During catalysis, ATP synthesis in the catalytic domain of F(1) is coupled via a rotary mechanism of the central stalk subunits to proton translocation. Key component of the F(0) channel; it plays a direct role in translocation across the membrane. A homomeric c-ring of between 10-14 subunits forms the central stalk rotor element with the F(1) delta and epsilon subunits. This Streptococcus mutans serotype c (strain ATCC 700610 / UA159) protein is ATP synthase subunit c.